Consider the following 62-residue polypeptide: Large ribosomal subunit protein eL24 (62 aa).

Zn(2+) contacts are provided by C6, C9, C32, and C36. Residues 6–36 form a C4-type zinc finger; that stretch reads CSFCEGTIEPGCGKKYVKKDGSVMHFCSSKC.

It belongs to the eukaryotic ribosomal protein eL24 family. Part of the 50S ribosomal subunit. Forms a cluster with proteins L3 and L14. Zn(2+) is required as a cofactor.

Binds to the 23S rRNA. This Methanococcus maripaludis (strain C7 / ATCC BAA-1331) protein is Large ribosomal subunit protein eL24.